Consider the following 256-residue polypeptide: Thiazole synthase (256 aa).

The Schiff-base intermediate with DXP role is filled by K102. Residues G163, 189-190, and 211-212 each bind 1-deoxy-D-xylulose 5-phosphate; these read AG and AT.

The protein belongs to the ThiG family. In terms of assembly, homotetramer. Forms heterodimers with either ThiH or ThiS.

It is found in the cytoplasm. It carries out the reaction [ThiS sulfur-carrier protein]-C-terminal-Gly-aminoethanethioate + 2-iminoacetate + 1-deoxy-D-xylulose 5-phosphate = [ThiS sulfur-carrier protein]-C-terminal Gly-Gly + 2-[(2R,5Z)-2-carboxy-4-methylthiazol-5(2H)-ylidene]ethyl phosphate + 2 H2O + H(+). It participates in cofactor biosynthesis; thiamine diphosphate biosynthesis. In terms of biological role, catalyzes the rearrangement of 1-deoxy-D-xylulose 5-phosphate (DXP) to produce the thiazole phosphate moiety of thiamine. Sulfur is provided by the thiocarboxylate moiety of the carrier protein ThiS. In vitro, sulfur can be provided by H(2)S. In Nocardia farcinica (strain IFM 10152), this protein is Thiazole synthase.